The primary structure comprises 198 residues: Imidazoleglycerol-phosphate dehydratase (198 aa).

Belongs to the imidazoleglycerol-phosphate dehydratase family.

Its subcellular location is the cytoplasm. It carries out the reaction D-erythro-1-(imidazol-4-yl)glycerol 3-phosphate = 3-(imidazol-4-yl)-2-oxopropyl phosphate + H2O. Its pathway is amino-acid biosynthesis; L-histidine biosynthesis; L-histidine from 5-phospho-alpha-D-ribose 1-diphosphate: step 6/9. This is Imidazoleglycerol-phosphate dehydratase from Herminiimonas arsenicoxydans.